The primary structure comprises 269 residues: Integral membrane protein 2C (269 aa).

Thr39 is modified (phosphothreonine). The chain crosses the membrane as a helical; Signal-anchor for type II membrane protein span at residues 57 to 77 (VGGVCYLSMGMVVLLMGLVFA). In terms of domain architecture, BRICHOS spans 138-232 (FGGGDPADII…LCNGKDTYRL (95 aa)). A disulfide bridge links Cys165 with Cys224. An N-linked (GlcNAc...) asparagine glycan is attached at Asn171.

This sequence belongs to the ITM2 family. In terms of assembly, interacts with BACE1. Interacts with APP. Interacts with STMN2. Type I membrane-bound, as well as soluble, furin has a pre-eminent role in ITM2C proteolytic processing. PCSK7 and PCSK5 may also be involved although to a lesser extent. The soluble form of PCSK7 is incapable of processing ITM2C. Fails to undergo shedding by ADAM10 and intramembrane cleavage by SPPL2B.

The protein resides in the lysosome membrane. Its subcellular location is the cell membrane. Functionally, negative regulator of amyloid-beta peptide production. May inhibit the processing of APP by blocking its access to alpha- and beta-secretase. Binding to the beta-secretase-cleaved APP C-terminal fragment is negligible, suggesting that ITM2C is a poor gamma-secretase cleavage inhibitor. May play a role in TNF-induced cell death and neuronal differentiation. In Sus scrofa (Pig), this protein is Integral membrane protein 2C (ITM2C).